Reading from the N-terminus, the 291-residue chain is Gamma-sarcoglycan (291 aa).

A helical; Signal-anchor for type II membrane protein membrane pass occupies residues 38–58 (LFVLLLLIILLVNFALTIWIL). Over 59 to 291 (KVMWFSPTGM…TCHEHSHICL (233 aa)) the chain is Extracellular. N110 carries N-linked (GlcNAc...) asparagine glycosylation. 2 disulfide bridges follow: C265-C290 and C267-C283.

This sequence belongs to the sarcoglycan beta/delta/gamma/zeta family. Interacts with the syntrophin SNTA1. Cross-link to form 2 major subcomplexes: one consisting of SGCB, SGCD and SGCG and the other consisting of SGCB and SGCD. The association between SGCB and SGCG is particularly strong while SGCA is loosely associated with the other sarcoglycans. Interacts with FLNC. Disulfide bonds are present.

It localises to the cell membrane. It is found in the sarcolemma. The protein resides in the cytoplasm. Its subcellular location is the cytoskeleton. Functionally, component of the sarcoglycan complex, a subcomplex of the dystrophin-glycoprotein complex which forms a link between the F-actin cytoskeleton and the extracellular matrix. This chain is Gamma-sarcoglycan (SGCG), found in Canis lupus familiaris (Dog).